A 243-amino-acid chain; its full sequence is Aldehyde decarbonylase (243 aa).

Residues glutamate 45, glutamate 73, histidine 76, glutamate 128, and histidine 160 each contribute to the Fe cation site.

It belongs to the aldehyde decarbonylase family. Binds 2 metal cations per subunit. The catalytic dinuclear metal-binding site could be either a di-iron or a manganese-iron cofactor. serves as cofactor.

It catalyses the reaction a long-chain fatty aldehyde + 2 NADPH + O2 + H(+) = a long-chain alkane + formate + 2 NADP(+) + H2O. Functionally, catalyzes the decarbonylation of fatty aldehydes to alkanes. Requires the presence of ferredoxin, ferredoxin reductase and NADPH for in vitro decarbonylase activity. Involved in the biosynthesis of alkanes, mainly heptadecane and pentadecane. The protein is Aldehyde decarbonylase of Prochlorococcus marinus (strain MIT 9313).